A 375-amino-acid chain; its full sequence is Peptide chain release factor 1 (375 aa).

Q237 is modified (N5-methylglutamine). Over residues 289-299 (AAREAQERQER) the composition is skewed to basic and acidic residues. Residues 289 to 326 (AAREAQERQERASQVGSGDRSEKIRTYNYPQNRVTDHR) are disordered.

Belongs to the prokaryotic/mitochondrial release factor family. In terms of processing, methylated by PrmC. Methylation increases the termination efficiency of RF1.

Its subcellular location is the cytoplasm. Peptide chain release factor 1 directs the termination of translation in response to the peptide chain termination codons UAG and UAA. The chain is Peptide chain release factor 1 (prfA) from Deinococcus radiodurans (strain ATCC 13939 / DSM 20539 / JCM 16871 / CCUG 27074 / LMG 4051 / NBRC 15346 / NCIMB 9279 / VKM B-1422 / R1).